The sequence spans 178 residues: Cytochrome b6-f complex iron-sulfur subunit (178 aa).

A helical membrane pass occupies residues 20 to 42 (LLTFGSVTGVALGSLYPVVKYFI). Residues 68-161 (WLANHSDGDR…IAVENDNVFV (94 aa)) form the Rieske domain. The [2Fe-2S] cluster site is built by cysteine 107, histidine 109, cysteine 125, and histidine 128. Cysteine 112 and cysteine 127 form a disulfide bridge.

It belongs to the Rieske iron-sulfur protein family. As to quaternary structure, the 4 large subunits of the cytochrome b6-f complex are cytochrome b6, subunit IV (17 kDa polypeptide, PetD), cytochrome f and the Rieske protein, while the 4 small subunits are PetG, PetL, PetM and PetN. The complex functions as a dimer. Requires [2Fe-2S] cluster as cofactor.

The protein localises to the cellular thylakoid membrane. It catalyses the reaction 2 oxidized [plastocyanin] + a plastoquinol + 2 H(+)(in) = 2 reduced [plastocyanin] + a plastoquinone + 4 H(+)(out). Component of the cytochrome b6-f complex, which mediates electron transfer between photosystem II (PSII) and photosystem I (PSI), cyclic electron flow around PSI, and state transitions. The polypeptide is Cytochrome b6-f complex iron-sulfur subunit (Prochlorococcus marinus (strain MIT 9303)).